The chain runs to 159 residues: Large ribosomal subunit protein uL11 (159 aa).

It belongs to the universal ribosomal protein uL11 family. In terms of assembly, part of the ribosomal stalk of the 50S ribosomal subunit. Interacts with L10 and the large rRNA to form the base of the stalk. L10 forms an elongated spine to which L12 dimers bind in a sequential fashion forming a multimeric L10(L12)X complex.

In terms of biological role, forms part of the ribosomal stalk which helps the ribosome interact with GTP-bound translation factors. The chain is Large ribosomal subunit protein uL11 from Methanococcus maripaludis (strain DSM 14266 / JCM 13030 / NBRC 101832 / S2 / LL).